A 401-amino-acid chain; its full sequence is Acetylornithine aminotransferase (401 aa).

Residues 121-122 (GA) and Phe-154 contribute to the pyridoxal 5'-phosphate site. Arg-157 is a binding site for N(2)-acetyl-L-ornithine. Residue 239 to 242 (DEVQ) participates in pyridoxal 5'-phosphate binding. Lys-268 carries the N6-(pyridoxal phosphate)lysine modification. N(2)-acetyl-L-ornithine is bound at residue Ser-296. Thr-297 provides a ligand contact to pyridoxal 5'-phosphate.

The protein belongs to the class-III pyridoxal-phosphate-dependent aminotransferase family. ArgD subfamily. Homodimer. Pyridoxal 5'-phosphate is required as a cofactor.

It localises to the cytoplasm. It carries out the reaction N(2)-acetyl-L-ornithine + 2-oxoglutarate = N-acetyl-L-glutamate 5-semialdehyde + L-glutamate. Its pathway is amino-acid biosynthesis; L-arginine biosynthesis; N(2)-acetyl-L-ornithine from L-glutamate: step 4/4. This chain is Acetylornithine aminotransferase, found in Myxococcus xanthus.